The primary structure comprises 487 residues: Protein nucleotidyltransferase YdiU (487 aa).

Positions 90, 92, 93, 113, 125, 126, 176, and 183 each coordinate ATP. The active-site Proton acceptor is the aspartate 252. Asparagine 253 and aspartate 262 together coordinate Mg(2+). Aspartate 262 serves as a coordination point for ATP.

It belongs to the SELO family. Mg(2+) is required as a cofactor. Mn(2+) serves as cofactor.

It carries out the reaction L-seryl-[protein] + ATP = 3-O-(5'-adenylyl)-L-seryl-[protein] + diphosphate. It catalyses the reaction L-threonyl-[protein] + ATP = 3-O-(5'-adenylyl)-L-threonyl-[protein] + diphosphate. The catalysed reaction is L-tyrosyl-[protein] + ATP = O-(5'-adenylyl)-L-tyrosyl-[protein] + diphosphate. The enzyme catalyses L-histidyl-[protein] + UTP = N(tele)-(5'-uridylyl)-L-histidyl-[protein] + diphosphate. It carries out the reaction L-seryl-[protein] + UTP = O-(5'-uridylyl)-L-seryl-[protein] + diphosphate. It catalyses the reaction L-tyrosyl-[protein] + UTP = O-(5'-uridylyl)-L-tyrosyl-[protein] + diphosphate. Its function is as follows. Nucleotidyltransferase involved in the post-translational modification of proteins. It can catalyze the addition of adenosine monophosphate (AMP) or uridine monophosphate (UMP) to a protein, resulting in modifications known as AMPylation and UMPylation. In Pseudomonas syringae pv. syringae (strain B728a), this protein is Protein nucleotidyltransferase YdiU.